The following is a 100-amino-acid chain: Co-chaperonin GroES (100 aa).

The protein belongs to the GroES chaperonin family. As to quaternary structure, heptamer of 7 subunits arranged in a ring. Interacts with the chaperonin GroEL.

It localises to the cytoplasm. In terms of biological role, together with the chaperonin GroEL, plays an essential role in assisting protein folding. The GroEL-GroES system forms a nano-cage that allows encapsulation of the non-native substrate proteins and provides a physical environment optimized to promote and accelerate protein folding. GroES binds to the apical surface of the GroEL ring, thereby capping the opening of the GroEL channel. This is Co-chaperonin GroES from Rhodothermus marinus (Rhodothermus obamensis).